The chain runs to 516 residues: Putative protein NRT1/ PTR FAMILY 2.2 (516 aa).

A run of 11 helical transmembrane segments spans residues 31-51, 67-87, 90-110, 138-158, 174-194, 201-221, 320-340, 362-382, 394-414, 437-457, and 476-496; these read TLLG…VFLI, IVNG…DSFF, IPVI…LTMI, ILYI…FTLA, FFNW…TAIV, SWKL…IVFV, LLLA…LIIL, VIVI…VYPM, LQKV…SAIV, FIAS…ITLI, and VYWL…AWFY.

The protein belongs to the major facilitator superfamily. Proton-dependent oligopeptide transporter (POT/PTR) (TC 2.A.17) family. Not detected.

The protein resides in the membrane. Functionally, transporter involved in a passive nitrate efflux. This is Putative protein NRT1/ PTR FAMILY 2.2 (NPF2.2) from Arabidopsis thaliana (Mouse-ear cress).